The chain runs to 324 residues: Proto-oncogene Mas (324 aa).

The Extracellular portion of the chain corresponds to 1 to 35 (MDQSNMTSLAEEKAMNTSSRNASLGSSHPPIPIVH). N-linked (GlcNAc...) asparagine glycosylation is found at asparagine 5, asparagine 16, and asparagine 21. A helical membrane pass occupies residues 36 to 60 (WVIMSISPLGFVENGILLWFLCFRM). At 61–64 (RRNP) the chain is on the cytoplasmic side. A helical transmembrane segment spans residues 65 to 86 (FTVYITHLSIADISLLFCIFIL). Over 87–103 (SIDYALDYELSSGHHYT) the chain is Extracellular. The chain crosses the membrane as a helical span at residues 104–127 (IVTLSVTFLFGYNTGLYLLTAISV). The Cytoplasmic segment spans residues 128–148 (ERCLSVLYPIWYRCHRPKHQS). The helical transmembrane segment at 149–171 (AFVCALLWALSCLVTTMEYVMCI) threads the bilayer. Residues 172–184 (DSGEESHSRSDCR) lie on the Extracellular side of the membrane. Residues 185 to 205 (AVIIFIAILSFLVFTPLMLVS) traverse the membrane as a helical segment. At 206-223 (STILVVKIRKNTWASHSS) the chain is on the cytoplasmic side. The chain crosses the membrane as a helical span at residues 224–244 (KLYIVIMVTIIIFLIFAMPMR). Residues 245 to 262 (VLYLLYYEYWSAFGNLHN) lie on the Extracellular side of the membrane. Residues 263-283 (ISLLFSTINSSANPFIYFFVG) form a helical membrane-spanning segment. Over 284–324 (SSKKKRFRESLKVVLTRAFKDEMQPRRQEGNGNTVSIETVV) the chain is Cytoplasmic.

This sequence belongs to the G-protein coupled receptor 1 family. In terms of assembly, interacts with AGTR1. Interacts with FLNA (via filamin repeat 21); increases PKA-mediated phosphorylation of FLNA.

Its subcellular location is the cell membrane. Functionally, acts specifically as a functional antagonist of AGTR1 (angiotensin-2 type 1 receptor), although it up-regulates AGTR1 receptor levels. Positive regulation of AGTR1 levels occurs through activation of the G-proteins GNA11 and GNAQ, and stimulation of the protein kinase C signaling cascade. The antagonist effect on AGTR1 function is probably due to AGTR1 being physically altered by MAS1. Receptor for angiotensin 1-7. The chain is Proto-oncogene Mas (Mas1) from Mus musculus (Mouse).